The primary structure comprises 538 residues: uncharacterized protein (538 aa).

Low complexity predominate over residues Met-1 to Ser-13. The interval Met-1–Phe-43 is disordered. 12 consecutive transmembrane segments (helical) span residues Ile-97 to Phe-117, Val-134 to Ala-154, Lys-163 to Ala-183, Phe-194 to Met-214, Ile-226 to Ala-246, Trp-254 to Lys-274, Pro-328 to Leu-348, Ala-367 to Phe-387, Leu-408 to Ser-428, Val-434 to Phe-454, Leu-458 to Ile-478, and Gly-504 to Phe-524.

Belongs to the major facilitator superfamily. CAR1 family.

It is found in the endoplasmic reticulum. The protein resides in the membrane. This is an uncharacterized protein from Schizosaccharomyces pombe (strain 972 / ATCC 24843) (Fission yeast).